Reading from the N-terminus, the 365-residue chain is Uroporphyrinogen decarboxylase (365 aa).

Residues Arg27–Arg31, Asp77, Tyr154, Ser209, and His327 contribute to the substrate site.

It belongs to the uroporphyrinogen decarboxylase family. Homodimer.

The protein localises to the cytoplasm. It carries out the reaction uroporphyrinogen III + 4 H(+) = coproporphyrinogen III + 4 CO2. It functions in the pathway porphyrin-containing compound metabolism; protoporphyrin-IX biosynthesis; coproporphyrinogen-III from 5-aminolevulinate: step 4/4. Catalyzes the decarboxylation of four acetate groups of uroporphyrinogen-III to yield coproporphyrinogen-III. The polypeptide is Uroporphyrinogen decarboxylase (Alkalilimnicola ehrlichii (strain ATCC BAA-1101 / DSM 17681 / MLHE-1)).